We begin with the raw amino-acid sequence, 987 residues long: 110 kDa U5 small nuclear ribonucleoprotein component CLO (987 aa).

The tract at residues 1–54 (MESSLYDEFGNYVGPEIESDRDSDDEVEDEDLQDKHLEENGSDGEQGPGGSNGW) is disordered. Positions 17–32 (IESDRDSDDEVEDEDL) are enriched in acidic residues. Positions 136-422 (ALVRNVALVG…LGVTLSNSAY (287 aa)) constitute a tr-type G domain. Residues 145 to 152 (GHLQHGKT) form a G1 region. Residue 145–152 (GHLQHGKT) coordinates GTP. The G2 stretch occupies residues 189–193 (NISIK). Residues 215-218 (DTPG) are G3. Residues 215–219 (DTPGH) and 269–272 (NKVD) contribute to the GTP site. The interval 269 to 272 (NKVD) is G4. A G5 region spans residues 395–397 (YSQ).

This sequence belongs to the TRAFAC class translation factor GTPase superfamily. Classic translation factor GTPase family. Interacts with BRR2A and PRP8A. As to expression, expressed in flower buds, open flowers and siliques. Expressed at low levels in rosettes leaves, cauline leaves and stems.

The protein resides in the nucleus speckle. Splicing factor involved in pre-mRNA splicing and component of the spliceosome. Essential for reproduction. In female gametophyte, is necessary for the egg cell and central cell fate determination and hence reproductive success. Involved in a mechanism that prevents accessory cells from adopting gametic cell fate. Is necessary to restrict LIS expression to interfere with egg-cell specification. Probable component of U5 small nuclear ribonucleoprotein (snRNP) that is required for pre-mRNA splicing. Plays an essential role in female gametogenesis and embryo development. Required for the control of polarized cell growth and cell proliferation during floral organ morphogenesis. The polypeptide is 110 kDa U5 small nuclear ribonucleoprotein component CLO (Arabidopsis thaliana (Mouse-ear cress)).